Here is a 474-residue protein sequence, read N- to C-terminus: tRNA-2-methylthio-N(6)-dimethylallyladenosine synthase (474 aa).

Positions 3 to 120 (KKLHIKTWGC…LPEMINSVRG (118 aa)) constitute an MTTase N-terminal domain. Residues Cys-12, Cys-49, Cys-83, Cys-157, Cys-161, and Cys-164 each coordinate [4Fe-4S] cluster. The 233-residue stretch at 143-375 (RAEGPTAFVS…QERINQQAMA (233 aa)) folds into the Radical SAM core domain. One can recognise a TRAM domain in the interval 378–441 (RRMLGTTQRI…PNSLRGKVVR (64 aa)).

This sequence belongs to the methylthiotransferase family. MiaB subfamily. As to quaternary structure, monomer. [4Fe-4S] cluster is required as a cofactor.

It is found in the cytoplasm. It carries out the reaction N(6)-dimethylallyladenosine(37) in tRNA + (sulfur carrier)-SH + AH2 + 2 S-adenosyl-L-methionine = 2-methylsulfanyl-N(6)-dimethylallyladenosine(37) in tRNA + (sulfur carrier)-H + 5'-deoxyadenosine + L-methionine + A + S-adenosyl-L-homocysteine + 2 H(+). Functionally, catalyzes the methylthiolation of N6-(dimethylallyl)adenosine (i(6)A), leading to the formation of 2-methylthio-N6-(dimethylallyl)adenosine (ms(2)i(6)A) at position 37 in tRNAs that read codons beginning with uridine. The polypeptide is tRNA-2-methylthio-N(6)-dimethylallyladenosine synthase (Salmonella paratyphi A (strain ATCC 9150 / SARB42)).